Here is a 197-residue protein sequence, read N- to C-terminus: MVFEYPKGVELIAGVDEVGRGPLVGAVVTAAVILDPHQPILGLNDSKKLSEKKRLLLAEEIKQKALAWSLGRAEAEEIDQLNILHATMLAMKRAVENLKIQPHFVLVDGNRVPELMIPAQAIVKGDGLVAEISAASILAKVARDQEMAELDKRYPEYAFAQHKGYPTALHLAKLAELGPLAQHRRSFAPVRKLLNTL.

Residues 10 to 197 (ELIAGVDEVG…APVRKLLNTL (188 aa)) form the RNase H type-2 domain. Residues Asp-16, Glu-17, and Asp-108 each contribute to the a divalent metal cation site.

Belongs to the RNase HII family. It depends on Mn(2+) as a cofactor. Requires Mg(2+) as cofactor.

It localises to the cytoplasm. It catalyses the reaction Endonucleolytic cleavage to 5'-phosphomonoester.. Its function is as follows. Endonuclease that specifically degrades the RNA of RNA-DNA hybrids. This Pasteurella multocida (strain Pm70) protein is Ribonuclease HII (rnhB).